The following is a 111-amino-acid chain: Large ribosomal subunit protein uL22 (111 aa).

It belongs to the universal ribosomal protein uL22 family. Part of the 50S ribosomal subunit.

In terms of biological role, this protein binds specifically to 23S rRNA; its binding is stimulated by other ribosomal proteins, e.g. L4, L17, and L20. It is important during the early stages of 50S assembly. It makes multiple contacts with different domains of the 23S rRNA in the assembled 50S subunit and ribosome. Its function is as follows. The globular domain of the protein is located near the polypeptide exit tunnel on the outside of the subunit, while an extended beta-hairpin is found that lines the wall of the exit tunnel in the center of the 70S ribosome. In Geotalea uraniireducens (strain Rf4) (Geobacter uraniireducens), this protein is Large ribosomal subunit protein uL22.